Here is a 63-residue protein sequence, read N- to C-terminus: Large ribosomal subunit protein bL32 (63 aa).

A compositionally biased stretch (basic residues) spans Met-1 to Arg-16. Residues Met-1–Ile-22 are disordered.

This sequence belongs to the bacterial ribosomal protein bL32 family.

The sequence is that of Large ribosomal subunit protein bL32 from Beijerinckia indica subsp. indica (strain ATCC 9039 / DSM 1715 / NCIMB 8712).